Reading from the N-terminus, the 1977-residue chain is Echinoderm microtubule-associated protein-like 5 (1977 aa).

WD repeat units follow at residues 59-100, 104-145, 148-187, 195-233, 235-273, 280-321, 323-362, 406-445, 449-488, and 561-601; these read GHSD…TVSV, VHTH…MLSM, GHTDRIFDISWDLYQPNKLVSCGVKHIKFWSLCGNALTPK, GDLQTILCLACARDELTYSGALNGDIYVWKGINLIRTIQ, AHTAGIFSMNSCEEGFATGGRDGCIRLWDLTFKPITVID, GYKG…LIMQ, HCEGELWALAVHPTKPLAVTGSDDRSVRIWSLVDHALIAR, DRKEAIHELKYSPDGAYLAVGCNDSSVDIYGVAQRYKKVG, GSLSFITHLDWSSDSRYLQTNDGSGKRLLYKMPGGKEVTS, and GHSA…KLKD. Residues 609–629 form a disordered region; the sequence is ESLAESNSDESDSDLSDVPEL. Residues 615 to 629 are compositionally biased toward acidic residues; sequence NSDESDSDLSDVPEL. WD repeat units lie at residues 725–766, 770–811, 814–853, 861–900, 901–940, 996–1035, 1038–1077, 1080–1120, and 1236–1276; these read GHDD…PLSI, YHQY…KLSV, GSKDKIFVVKMNPYVPDKLITAGIKHMKFWRRAGGGLIGK, GKNDTMMCAVYGWTEEMAFSGTSTGDVCIWRDVFLVKTVK, AHDGPVFSMHALEKGFVTGGKDGMVALWDDSFERCLKTYA, HMEGEVWGLATHPYLPICATVSDDKTLRIWDLSPSHCMLA, KLKKGGRCCCFSPDGKALAVGLNDGSFLMANADTLEDLVS, HRKD…RVGV, and AHST…HREK. Disordered stretches follow at residues 1276–1297 and 1323–1363; these read KKYCDSEESDIDSEEDGGYDSD and PHLQ…NVGK. Residues 1281 to 1294 show a composition bias toward acidic residues; it reads SEESDIDSEEDGGY. Over residues 1326–1337 the composition is skewed to basic and acidic residues; it reads QQKEPSVDERQG. WD repeat units lie at residues 1420-1471, 1475-1516, 1519-1558, 1568-1606, 1608-1654, 1699-1739, 1741-1782, 1783-1822, 1895-1934, and 1940-1977; these read EHND…TLSI, SHSK…KIAS, GHNQRIFVAEFRPDSDTQFVSVGIKHVKFWTLAGRALLSK, ARMQTMLAVAFGANNLTFTGTISGDVCVWKDHILCRVVA, AHNG…RAFR, GHVD…MLNK, NLGH…GKKR, DRRCAIHDIRFSPDSRYLAVGSSENSVDFYDLTLGPTLNR, AEKADVTCACVSHSGISLVTGDDFGMVKLYDFPCPEKFAK, and GHSPHVTNIRFTSGDRHVVSAGGDDCSLFVWKCVHMPH.

It belongs to the WD repeat EMAP family.

Its subcellular location is the cytoplasm. The protein localises to the cytoskeleton. In terms of biological role, may modify the assembly dynamics of microtubules, such that microtubules are slightly longer, but more dynamic. The sequence is that of Echinoderm microtubule-associated protein-like 5 (Eml5) from Mus musculus (Mouse).